The sequence spans 121 residues: Large ribosomal subunit protein uL14 (121 aa).

Belongs to the universal ribosomal protein uL14 family. As to quaternary structure, part of the 50S ribosomal subunit. Forms a cluster with proteins L3 and L19. In the 70S ribosome, L14 and L19 interact and together make contacts with the 16S rRNA in bridges B5 and B8.

Its function is as follows. Binds to 23S rRNA. Forms part of two intersubunit bridges in the 70S ribosome. The protein is Large ribosomal subunit protein uL14 of Pseudoalteromonas atlantica (strain T6c / ATCC BAA-1087).